We begin with the raw amino-acid sequence, 956 residues long: Valine--tRNA ligase (956 aa).

The short motif at 43-53 (PNITGNLHIGH) is the 'HIGH' region element. The 'KMSKS' region motif lies at 556–560 (KMSKS). Lys-559 contacts ATP. Positions 889–920 (PKEKELKNLNKEISKIQLAINKLQQRLSNEEF) form a coiled coil.

This sequence belongs to the class-I aminoacyl-tRNA synthetase family. ValS type 1 subfamily. As to quaternary structure, monomer.

The protein localises to the cytoplasm. It carries out the reaction tRNA(Val) + L-valine + ATP = L-valyl-tRNA(Val) + AMP + diphosphate. Catalyzes the attachment of valine to tRNA(Val). As ValRS can inadvertently accommodate and process structurally similar amino acids such as threonine, to avoid such errors, it has a 'posttransfer' editing activity that hydrolyzes mischarged Thr-tRNA(Val) in a tRNA-dependent manner. In Buchnera aphidicola subsp. Baizongia pistaciae (strain Bp), this protein is Valine--tRNA ligase.